The sequence spans 274 residues: Nitrogenase iron protein (274 aa).

8–15 (GKGGIGKS) contributes to the ATP binding site. Position 94 (C94) interacts with [4Fe-4S] cluster. R97 is modified (ADP-ribosylarginine; by dinitrogenase reductase ADP-ribosyltransferase). C131 contacts [4Fe-4S] cluster.

Belongs to the NifH/BchL/ChlL family. As to quaternary structure, homodimer. [4Fe-4S] cluster serves as cofactor. The reversible ADP-ribosylation of Arg-97 inactivates the nitrogenase reductase and regulates nitrogenase activity.

The enzyme catalyses N2 + 8 reduced [2Fe-2S]-[ferredoxin] + 16 ATP + 16 H2O = H2 + 8 oxidized [2Fe-2S]-[ferredoxin] + 2 NH4(+) + 16 ADP + 16 phosphate + 6 H(+). Its function is as follows. The key enzymatic reactions in nitrogen fixation are catalyzed by the nitrogenase complex, which has 2 components: the iron protein and the molybdenum-iron protein. The sequence is that of Nitrogenase iron protein from Pelodictyon phaeoclathratiforme (strain DSM 5477 / BU-1).